We begin with the raw amino-acid sequence, 612 residues long: MPAYRSRTTTHGRNMAGARGLWRATGMKDSDFGKPIIAVVNSFTQFVPGHVHLKDLGQLVAREIEAAGGVAKEFNTIAVDDGIAMGHDGMLYSLPSRELIADSVEYMVNAHCADAMVCISNCDKITPGMLMASLRLNIPTVFVSGGPMEAGKVVLHGKTHALDLVDAMVAAADEKISDEDVQTIERSACPTCGSCSGMFTANSMNCLTEALGLSLPGNGSTLATHADRKRLFVEAGHLIVDLARRYYEQDDIKALPRTIASKQAFENAMALDIAMGGSTNTVLHILAAAHEGEIDFTMADIDALSRRVPCLSKVAPAKSDVHMEDVHRAGGIMSILGELDKGGLLNRNCPTVHAETLGDAIDRWDITRTTSETVRNFYRAAPGGIPTQVAFSQEARWDELDTDRQNGVIRSVEHPFSRDGGLAVLKGNLAVDGCIVKTAGVDESILKFSGPARVFESQDASVKAILANEVKAGDVVVIRYEGPKGGPGMQEMLYPTSYLKSKGLGKACALITDGRFSGGTSGLSIGHASPEAANGGTIGLVREGDMIDIDIPNRTISLRVDEAELAARRADQDAKGWHPAEVRKRNVTTALKAYAAFATSADRGAVRDLNAR.

Asp-81 serves as a coordination point for Mg(2+). Cys-122 is a binding site for [2Fe-2S] cluster. 2 residues coordinate Mg(2+): Asp-123 and Lys-124. Lys-124 carries the post-translational modification N6-carboxylysine. Cys-195 contributes to the [2Fe-2S] cluster binding site. Mg(2+) is bound at residue Glu-491. The active-site Proton acceptor is Ser-517.

The protein belongs to the IlvD/Edd family. As to quaternary structure, homodimer. The cofactor is [2Fe-2S] cluster. It depends on Mg(2+) as a cofactor.

It catalyses the reaction (2R)-2,3-dihydroxy-3-methylbutanoate = 3-methyl-2-oxobutanoate + H2O. The enzyme catalyses (2R,3R)-2,3-dihydroxy-3-methylpentanoate = (S)-3-methyl-2-oxopentanoate + H2O. Its pathway is amino-acid biosynthesis; L-isoleucine biosynthesis; L-isoleucine from 2-oxobutanoate: step 3/4. It participates in amino-acid biosynthesis; L-valine biosynthesis; L-valine from pyruvate: step 3/4. Its function is as follows. Functions in the biosynthesis of branched-chain amino acids. Catalyzes the dehydration of (2R,3R)-2,3-dihydroxy-3-methylpentanoate (2,3-dihydroxy-3-methylvalerate) into 2-oxo-3-methylpentanoate (2-oxo-3-methylvalerate) and of (2R)-2,3-dihydroxy-3-methylbutanoate (2,3-dihydroxyisovalerate) into 2-oxo-3-methylbutanoate (2-oxoisovalerate), the penultimate precursor to L-isoleucine and L-valine, respectively. This is Dihydroxy-acid dehydratase from Rhizobium leguminosarum bv. trifolii (strain WSM2304).